Reading from the N-terminus, the 409-residue chain is Pentatricopeptide repeat-containing protein At1g01970 (409 aa).

PPR repeat units follow at residues 164–198 (NARDYTKIIHYYGKLNQVEDAERTLLSMKNRGFLI), 199–233 (DQVTLTAMVQLYSKAGCHKLAEETFNEIKLLGEPL), 234–268 (DYRSYGSMIMAYIRAGVPEKGESLLREMDSQEICA), 269–303 (GREVYKALLRDYSMGGDAEGAKRVFDAVQIAGITP), 304–338 (DVKLCGLLINAYSVSGQSQNARLAFENMRKAGIKA), and 339–373 (TDKCVALVLAAYEKEEKLNEALGFLVELEKDSIML).

It belongs to the PPR family. P subfamily.

This is Pentatricopeptide repeat-containing protein At1g01970 from Arabidopsis thaliana (Mouse-ear cress).